Here is a 234-residue protein sequence, read N- to C-terminus: Biosynthetic peptidoglycan transglycosylase (234 aa).

The helical transmembrane segment at 11–31 threads the bilayer; it reads RFLLFAMLGFVGLSVLLVLVF.

The protein belongs to the glycosyltransferase 51 family.

The protein resides in the cell inner membrane. It catalyses the reaction [GlcNAc-(1-&gt;4)-Mur2Ac(oyl-L-Ala-gamma-D-Glu-L-Lys-D-Ala-D-Ala)](n)-di-trans,octa-cis-undecaprenyl diphosphate + beta-D-GlcNAc-(1-&gt;4)-Mur2Ac(oyl-L-Ala-gamma-D-Glu-L-Lys-D-Ala-D-Ala)-di-trans,octa-cis-undecaprenyl diphosphate = [GlcNAc-(1-&gt;4)-Mur2Ac(oyl-L-Ala-gamma-D-Glu-L-Lys-D-Ala-D-Ala)](n+1)-di-trans,octa-cis-undecaprenyl diphosphate + di-trans,octa-cis-undecaprenyl diphosphate + H(+). Its pathway is cell wall biogenesis; peptidoglycan biosynthesis. In terms of biological role, peptidoglycan polymerase that catalyzes glycan chain elongation from lipid-linked precursors. In Chromohalobacter salexigens (strain ATCC BAA-138 / DSM 3043 / CIP 106854 / NCIMB 13768 / 1H11), this protein is Biosynthetic peptidoglycan transglycosylase.